The sequence spans 92 residues: Large ribosomal subunit protein bL34m (92 aa).

The N-terminal 46 residues, 1-46 (MALLAGSLLGPTSRSAALLGGRWLQPRAWLGFPDAWGLPTPQQARG), are a transit peptide targeting the mitochondrion. Polar residues predominate over residues 40–57 (TPQQARGKSRGNEYQPSN). The interval 40 to 63 (TPQQARGKSRGNEYQPSNIKRKNK) is disordered. The residue at position 71 (serine 71) is a Phosphoserine.

The protein belongs to the bacterial ribosomal protein bL34 family. In terms of assembly, component of the mitochondrial ribosome large subunit (39S) which comprises a 16S rRNA and about 50 distinct proteins.

Its subcellular location is the mitochondrion. The sequence is that of Large ribosomal subunit protein bL34m (MRPL34) from Macaca fascicularis (Crab-eating macaque).